Reading from the N-terminus, the 301-residue chain is Oxygen-dependent coproporphyrinogen-III oxidase (301 aa).

Ser-92 provides a ligand contact to substrate. Residues His-96 and His-106 each contribute to the a divalent metal cation site. His-106 functions as the Proton donor in the catalytic mechanism. A substrate-binding site is contributed by 108 to 110 (NVR). The a divalent metal cation site is built by His-145 and His-175. The segment at 240 to 275 (YVEFNLVWDRGTLFGLQTGGRTESILMSMPPLVRWE) is important for dimerization. 258-260 (GGR) contacts substrate.

The protein belongs to the aerobic coproporphyrinogen-III oxidase family. As to quaternary structure, homodimer. It depends on a divalent metal cation as a cofactor.

It localises to the cytoplasm. The enzyme catalyses coproporphyrinogen III + O2 + 2 H(+) = protoporphyrinogen IX + 2 CO2 + 2 H2O. Its pathway is porphyrin-containing compound metabolism; protoporphyrin-IX biosynthesis; protoporphyrinogen-IX from coproporphyrinogen-III (O2 route): step 1/1. Its function is as follows. Involved in the heme biosynthesis. Catalyzes the aerobic oxidative decarboxylation of propionate groups of rings A and B of coproporphyrinogen-III to yield the vinyl groups in protoporphyrinogen-IX. The chain is Oxygen-dependent coproporphyrinogen-III oxidase from Cronobacter sakazakii (strain ATCC BAA-894) (Enterobacter sakazakii).